Reading from the N-terminus, the 380-residue chain is Chaperone protein DnaJ (380 aa).

The segment at 1–48 (MAKKDYYDTLGVPKNASDDDIKKAYRKLAMKHHPDRNQGDKSKVSEEK) is disordered. In terms of domain architecture, J spans 5–72 (DYYDTLGVPK…NKRMAYDQYG (68 aa)). The span at 24 to 34 (AYRKLAMKHHP) shows a compositional bias: basic residues. Basic and acidic residues predominate over residues 35–48 (DRNQGDKSKVSEEK). A CR-type zinc finger spans residues 139-217 (GKEAQIRIPS…CHGVGKTKNN (79 aa)). Positions 152, 155, 169, 172, 191, 194, 205, and 208 each coordinate Zn(2+). CXXCXGXG motif repeat units lie at residues 152-159 (CNTCHGSG), 169-176 (CTTCHGHG), 191-198 (CPQCKGTG), and 205-212 (CVACHGVG). Positions 357–380 (KKGGARHSPSEEGWADKLKSFFSA) are disordered. Basic and acidic residues predominate over residues 364–380 (SPSEEGWADKLKSFFSA).

It belongs to the DnaJ family. As to quaternary structure, homodimer. Requires Zn(2+) as cofactor.

The protein resides in the cytoplasm. In terms of biological role, participates actively in the response to hyperosmotic and heat shock by preventing the aggregation of stress-denatured proteins and by disaggregating proteins, also in an autonomous, DnaK-independent fashion. Unfolded proteins bind initially to DnaJ; upon interaction with the DnaJ-bound protein, DnaK hydrolyzes its bound ATP, resulting in the formation of a stable complex. GrpE releases ADP from DnaK; ATP binding to DnaK triggers the release of the substrate protein, thus completing the reaction cycle. Several rounds of ATP-dependent interactions between DnaJ, DnaK and GrpE are required for fully efficient folding. Also involved, together with DnaK and GrpE, in the DNA replication of plasmids through activation of initiation proteins. The polypeptide is Chaperone protein DnaJ (Polaromonas sp. (strain JS666 / ATCC BAA-500)).